The following is a 501-amino-acid chain: Putative matrix metalloproteinase (501 aa).

The first 26 residues, 1–26, serve as a signal peptide directing secretion; that stretch reads MMPQYERKQIIIHISCVIICVVVTLT. N-linked (GlcNAc...) asparagine; by host glycans are attached at residues N48, N58, N61, N94, N116, and N163. H179 serves as a coordination point for Zn(2+). Residue E180 is part of the active site. The Zn(2+) site is built by H183 and H189. Residues N192, N267, N280, and N291 are each glycosylated (N-linked (GlcNAc...) asparagine; by host). Residues 311-356 form a Hemopexin repeat; sequence TGHIDTISVIRGELYIFVDEYHWRFRSNGLLYSGYPLKTTHSWSVP. N-linked (GlcNAc...) asparagine; by host glycans are attached at residues N379 and N493.

Belongs to the peptidase M10A family. Zn(2+) is required as a cofactor.

The polypeptide is Putative matrix metalloproteinase (Trichoplusia ni ascovirus 2c (TnAV-2c)).